Consider the following 75-residue polypeptide: UPF0154 protein MYPE400 (75 aa).

A helical transmembrane segment spans residues 5–27; it reads IGLCLGLGIPISLIIGAVIGYYF.

It belongs to the UPF0154 family.

The protein localises to the membrane. This is UPF0154 protein MYPE400 from Malacoplasma penetrans (strain HF-2) (Mycoplasma penetrans).